The primary structure comprises 347 residues: 5-deoxyribose 1-phosphate isomerase (347 aa).

Residues 48 to 50 (RGA), arginine 91, and glutamine 198 each bind substrate. The active-site Proton donor is the aspartate 239. 249-250 (NK) provides a ligand contact to substrate.

The protein belongs to the EIF-2B alpha/beta/delta subunits family. DrdI subfamily.

The enzyme catalyses 5-deoxy-alpha-D-ribose 1-phosphate = 5-deoxy-D-ribulose 1-phosphate. It participates in carbohydrate degradation. Functionally, catalyzes the isomerization of 5-deoxy-alpha-D-ribose 1-phosphate to 5-deoxy-D-ribulose 1-phosphate, as part of a 5-deoxyribose salvage pathway that recycles this toxic radical SAM enzyme by-product to mainstream metabolites. The chain is 5-deoxyribose 1-phosphate isomerase from Bacillus thuringiensis subsp. konkukian (strain 97-27).